Here is a 259-residue protein sequence, read N- to C-terminus: tRNA (guanine-N(7)-)-methyltransferase (259 aa).

A disordered region spans residues 1–74; that stretch reads MGHHGQMHAQ…PAEDPDRPGP (74 aa). S-adenosyl-L-methionine contacts are provided by E91, E116, N143, and D166. Residue D166 is part of the active site. Substrate contacts are provided by residues K170, D202, and 238–241; that span reads TKYE.

Belongs to the class I-like SAM-binding methyltransferase superfamily. TrmB family.

It catalyses the reaction guanosine(46) in tRNA + S-adenosyl-L-methionine = N(7)-methylguanosine(46) in tRNA + S-adenosyl-L-homocysteine. It functions in the pathway tRNA modification; N(7)-methylguanine-tRNA biosynthesis. Functionally, catalyzes the formation of N(7)-methylguanine at position 46 (m7G46) in tRNA. The chain is tRNA (guanine-N(7)-)-methyltransferase from Mycobacterium avium (strain 104).